The primary structure comprises 467 residues: MAAKLLLLLCLFSGLHARSRRVEEDDSEDSPSNQKWVLAPKSQDTDVTLILNKLLREYDKKLRPDIGIKPTVIDVDIYVNSIGPVSSINMEYQIDIFFAQTWTDSRLRFNSTMKILTLNSNMVGLIWIPDTIFRNSKTAEAHWITTPNQLLRIWNDGKILYTLRLTINAECQLQLHNFPMDAHACPLTFSSYGYPKEEMIYRWRKNSVEAADQKSWRLYQFDFMGLRNTTEIVTTSAGDYVVMTIYFELSRRMGYFTIQTYIPCILTVVLSWVSFWIKKDATPARTTLGITTVLTMTTLSTIARKSLPRVSYVTAMDLFVTVCFLFVFAALMEYATLNYYSSCRKPTIRKKKTSLLHPDSTRWIPDRISLQAPSNYSLLDMRPPPPVMITLNNSMYWQEFEDTCVYECLDGKDCQSFFCCYEECKSGSWRRGRIHIDVSELDSYSRVFFPTSFLLFNLVYWVGYLYL.

Residues 1–17 (MAAKLLLLLCLFSGLHA) form the signal peptide. Residues 18–256 (RSRRVEEDDS…FELSRRMGYF (239 aa)) lie on the Extracellular side of the membrane. Asn-110 carries an N-linked (GlcNAc...) asparagine glycan. The cysteines at positions 171 and 185 are disulfide-linked. Asn-228 carries an N-linked (GlcNAc...) asparagine glycan. The helical transmembrane segment at 257–277 (TIQTYIPCILTVVLSWVSFWI) threads the bilayer. At 278 to 283 (KKDATP) the chain is on the cytoplasmic side. The helical transmembrane segment at 284–303 (ARTTLGITTVLTMTTLSTIA) threads the bilayer. Residues 304-311 (RKSLPRVS) lie on the Extracellular side of the membrane. The helical transmembrane segment at 312 to 332 (YVTAMDLFVTVCFLFVFAALM) threads the bilayer. Residues 333–446 (EYATLNYYSS…DVSELDSYSR (114 aa)) lie on the Cytoplasmic side of the membrane. Residues 447–467 (VFFPTSFLLFNLVYWVGYLYL) traverse the membrane as a helical segment.

It belongs to the ligand-gated ion channel (TC 1.A.9) family. Gamma-aminobutyric acid receptor (TC 1.A.9.5) subfamily. GABRG3 sub-subfamily. Heteropentamer, formed by a combination of alpha (GABRA1-6), beta (GABRB1-3), gamma (GABRG1-3), delta (GABRD), epsilon (GABRE), rho (GABRR1-3), pi (GABRP) and theta (GABRQ) chains, each subunit exhibiting distinct physiological and pharmacological properties. Post-translationally, may be palmitoylated. As to expression, expressed in brain.

The protein resides in the postsynaptic cell membrane. It localises to the cell membrane. The catalysed reaction is chloride(in) = chloride(out). Allosterically potentiated by alphaxalone. Allosterically inhibited by pregnenolone sulfate. Inhibited by zinc and lanthanum. In terms of biological role, gamma subunit of the heteropentameric ligand-gated chloride channel gated by gamma-aminobutyric acid (GABA), a major inhibitory neurotransmitter in the brain. GABA-gated chloride channels, also named GABA(A) receptors (GABAAR), consist of five subunits arranged around a central pore and contain GABA active binding site(s) located at the alpha and beta subunit interface(s). When activated by GABA, GABAARs selectively allow the flow of chloride across the cell membrane down their electrochemical gradient. The chain is Gamma-aminobutyric acid receptor subunit gamma-3 from Rattus norvegicus (Rat).